Consider the following 368-residue polypeptide: N-acetylneuraminate epimerase (368 aa).

The signal sequence occupies residues 1-19 (MNKTITALAIIMASFAANA). Kelch repeat units follow at residues 40-84 (TVYI…AFID), 86-137 (NLYV…FVHN), 139-173 (KAYVTGGVNQNIFNGYFEDLNEAGKDSTAVDKINA), 174-219 (YYFD…VNKG), 222-265 (TWLI…VAGG), 287-336 (ENYQ…PWNN), and 338-367 (LLIIGGETAGGKAVTDSVFISVKDNKVTVQ). The active-site Proton acceptor is Glu-228.

This sequence belongs to the NanM family. Homodimer.

It localises to the periplasm. The catalysed reaction is N-acetyl-alpha-neuraminate = N-acetyl-beta-neuraminate. Functionally, converts alpha-N-acetylneuranimic acid (Neu5Ac) to the beta-anomer, accelerating the equilibrium between the alpha- and beta-anomers. Probably facilitates sialidase-negative bacteria to compete successfully for limited amounts of extracellular Neu5Ac, which is likely taken up in the beta-anomer. In addition, the rapid removal of sialic acid from solution might be advantageous to the bacterium to damp down host responses. In Escherichia coli O139:H28 (strain E24377A / ETEC), this protein is N-acetylneuraminate epimerase.